We begin with the raw amino-acid sequence, 1129 residues long: WD repeat and HMG-box DNA-binding protein 1 (1129 aa).

WD repeat units follow at residues 11–50 (GHTE…DPKF), 52–91 (NVGE…GILT), 92–131 (RFTT…QQKT), 134–173 (GHDA…CAIS), 184–223 (INAK…HQFD), 228–267 (FISQ…CMER), and 271–310 (EKGY…SGKT). Phosphoserine is present on residues S333, S374, S383, and S387. A Glycyl lysine isopeptide (Lys-Gly) (interchain with G-Cter in SUMO2) cross-link involves residue K397. K671 carries the post-translational modification N6-acetyllysine. T824 and T826 each carry phosphothreonine. Polar residues predominate over residues 848-857 (TATEWSQPRF). 2 disordered regions span residues 848-897 (TATE…SDVS) and 916-1017 (VSAS…ENQR). Residues 862 to 876 (EEDAEDSGEADDEEK) show a composition bias toward acidic residues. S868 is subject to Phosphoserine. A compositionally biased stretch (polar residues) spans 883–897 (GQNSFSKSTNSSDVS). 3 positions are modified to phosphoserine: S917, S919, and S932. Polar residues-rich tracts occupy residues 926 to 936 (SMNSARSTNIL) and 945 to 956 (KSTALSRTTNNE). K962 bears the N6-acetyllysine mark. Polar residues predominate over residues 974-987 (SAASYFQKRNSQTN). Residue S984 is modified to Phosphoserine. A compositionally biased stretch (basic and acidic residues) spans 988-997 (KTEEVKEENL). Positions 1016 to 1079 (QRPKTGFQMW…KGETASEGTE (64 aa)) form a DNA-binding region, HMG box. A phosphoserine mark is found at S1041 and S1090. Residues 1068-1113 (KAKGETASEGTEAKKRKRVVDESDETENQEEKAKENLNLSKKQKPL) form a disordered region. Residue K1127 forms a Glycyl lysine isopeptide (Lys-Gly) (interchain with G-Cter in SUMO1); alternate linkage. Residue K1127 forms a Glycyl lysine isopeptide (Lys-Gly) (interchain with G-Cter in SUMO2); alternate linkage.

As to quaternary structure, trimer. Interacts with the polymerase alpha catalytic subunit POLA1. Interacts with MCM10. Interacts with DNA2. Interacts with CDC45 and GINS2 subunit of GINS complex; these interactions associate WDHD1 with the CMG helicase complex.

Its subcellular location is the nucleus. It is found in the nucleoplasm. Core replisome component that acts as a replication initiation factor. Binds directly to the CMG complex and functions as a hub to recruit additional proteins to the replication fork. The sequence is that of WD repeat and HMG-box DNA-binding protein 1 from Homo sapiens (Human).